Consider the following 563-residue polypeptide: 3-oxosteroid 1-dehydrogenase (563 aa).

7–36 (DVVVVGSGAAGMVAALVAAHRGLSTVVVEK) contacts FAD.

It belongs to the FAD-dependent oxidoreductase 2 family. 3-oxosteroid dehydrogenase subfamily. Requires FAD as cofactor.

The catalysed reaction is a 3-oxosteroid + A = a 3-oxo-Delta(1)-steroid + AH2. It catalyses the reaction a 3-oxo-Delta(4)-steroid + A = a 3-oxo-Delta(1,4)-steroid + AH2. It carries out the reaction 3-oxochol-4-en-22-oyl-CoA + NAD(+) = 3-oxochola-1,4-dien-22-oyl-CoA + NADH + H(+). Functionally, involved in the degradation of cholesterol. Catalyzes the elimination of the C-1 and C-2 hydrogen atoms of the A-ring from the polycyclic ring structure of 3-ketosteroids. Has a clear preference for 3-ketosteroids with a saturated A-ring, displaying highest activity on 5alpha-AD (5alpha-androstane-3,17-dione) and 5alpha-T (5alpha-testosterone, also known as 17beta-hydroxy-5alpha-androstane-3-one). Is also involved in the formation of 3-keto-1,4-diene-steroid from 3-keto-4-ene-steroid. Catalyzes the conversion of 3-oxo-23,24-bisnorchol-4-en-22-oyl-coenzyme A thioester (4-BNC-CoA) to 3-oxo-23,24-bisnorchola-1,4-dien-22-oyl-coenzyme A thioester (1,4-BNC-CoA). The polypeptide is 3-oxosteroid 1-dehydrogenase (kstD) (Mycobacterium tuberculosis (strain ATCC 25618 / H37Rv)).